Here is a 328-residue protein sequence, read N- to C-terminus: Alanine racemase (328 aa).

Lys-33 (proton acceptor; specific for D-alanine) is an active-site residue. At Lys-33 the chain carries N6-(pyridoxal phosphate)lysine. Residue Arg-118 coordinates substrate. The active-site Proton acceptor; specific for L-alanine is Tyr-237. Met-283 serves as a coordination point for substrate.

Belongs to the alanine racemase family. Pyridoxal 5'-phosphate serves as cofactor.

It catalyses the reaction L-alanine = D-alanine. It functions in the pathway amino-acid biosynthesis; D-alanine biosynthesis; D-alanine from L-alanine: step 1/1. Catalyzes the interconversion of L-alanine and D-alanine. May also act on other amino acids. The protein is Alanine racemase (alr) of Campylobacter jejuni subsp. jejuni serotype O:23/36 (strain 81-176).